Consider the following 269-residue polypeptide: Shikimate dehydrogenase (NADP(+)) (269 aa).

Shikimate is bound by residues 15 to 17 and Thr62; that span reads SLS. The Proton acceptor role is filled by Lys66. 2 residues coordinate shikimate: Asn86 and Asp99. NADP(+) contacts are provided by residues 123-127, 146-151, and Leu213; these read GAGGA and NRTTAK. Tyr215 contributes to the shikimate binding site. Gly236 is a binding site for NADP(+).

This sequence belongs to the shikimate dehydrogenase family. As to quaternary structure, homodimer.

It catalyses the reaction shikimate + NADP(+) = 3-dehydroshikimate + NADPH + H(+). The protein operates within metabolic intermediate biosynthesis; chorismate biosynthesis; chorismate from D-erythrose 4-phosphate and phosphoenolpyruvate: step 4/7. In terms of biological role, involved in the biosynthesis of the chorismate, which leads to the biosynthesis of aromatic amino acids. Catalyzes the reversible NADPH linked reduction of 3-dehydroshikimate (DHSA) to yield shikimate (SA). The polypeptide is Shikimate dehydrogenase (NADP(+)) (Methanocella arvoryzae (strain DSM 22066 / NBRC 105507 / MRE50)).